The primary structure comprises 218 residues: Small ribosomal subunit protein uS3c (218 aa).

A KH type-2 domain is found at 47-118 (VRKHIKSSSN…KLRMALTEVE (72 aa)).

The protein belongs to the universal ribosomal protein uS3 family. Part of the 30S ribosomal subunit.

The protein localises to the plastid. The protein resides in the chloroplast. The chain is Small ribosomal subunit protein uS3c (rps3) from Anthoceros angustus (Hornwort).